The chain runs to 155 residues: Transcriptional repressor NrdR (155 aa).

Residues 3–34 (CPFCGHSNTQVLDTRMSEDGDAVRRRRRCEAC) fold into a zinc finger. Positions 49-139 (PAIVKKNGSR…VYRSFEDVSE (91 aa)) constitute an ATP-cone domain.

The protein belongs to the NrdR family. Zn(2+) serves as cofactor.

Negatively regulates transcription of bacterial ribonucleotide reductase nrd genes and operons by binding to NrdR-boxes. This Cupriavidus necator (strain ATCC 17699 / DSM 428 / KCTC 22496 / NCIMB 10442 / H16 / Stanier 337) (Ralstonia eutropha) protein is Transcriptional repressor NrdR.